The sequence spans 135 residues: Large ribosomal subunit protein uL22 (135 aa).

It belongs to the universal ribosomal protein uL22 family. Part of the 50S ribosomal subunit.

This protein binds specifically to 23S rRNA; its binding is stimulated by other ribosomal proteins, e.g. L4, L17, and L20. It is important during the early stages of 50S assembly. It makes multiple contacts with different domains of the 23S rRNA in the assembled 50S subunit and ribosome. In terms of biological role, the globular domain of the protein is located near the polypeptide exit tunnel on the outside of the subunit, while an extended beta-hairpin is found that lines the wall of the exit tunnel in the center of the 70S ribosome. This is Large ribosomal subunit protein uL22 from Christiangramia forsetii (strain DSM 17595 / CGMCC 1.15422 / KT0803) (Gramella forsetii).